The primary structure comprises 930 residues: Isoleucine--tRNA ligase (930 aa).

A 'HIGH' region motif is present at residues 57-67 (PYANGHLHIGH). Glu573 contributes to the L-isoleucyl-5'-AMP binding site. Positions 614–618 (KMSKS) match the 'KMSKS' region motif. Lys617 contacts ATP. The Zn(2+) site is built by Cys902, Cys905, Cys918, and Cys921.

The protein belongs to the class-I aminoacyl-tRNA synthetase family. IleS type 1 subfamily. Monomer. Requires Zn(2+) as cofactor.

The protein localises to the cytoplasm. It carries out the reaction tRNA(Ile) + L-isoleucine + ATP = L-isoleucyl-tRNA(Ile) + AMP + diphosphate. Catalyzes the attachment of isoleucine to tRNA(Ile). As IleRS can inadvertently accommodate and process structurally similar amino acids such as valine, to avoid such errors it has two additional distinct tRNA(Ile)-dependent editing activities. One activity is designated as 'pretransfer' editing and involves the hydrolysis of activated Val-AMP. The other activity is designated 'posttransfer' editing and involves deacylation of mischarged Val-tRNA(Ile). In Helicobacter hepaticus (strain ATCC 51449 / 3B1), this protein is Isoleucine--tRNA ligase.